A 113-amino-acid chain; its full sequence is Large ribosomal subunit protein uL24 (113 aa).

It belongs to the universal ribosomal protein uL24 family. Part of the 50S ribosomal subunit.

Its function is as follows. One of two assembly initiator proteins, it binds directly to the 5'-end of the 23S rRNA, where it nucleates assembly of the 50S subunit. In terms of biological role, one of the proteins that surrounds the polypeptide exit tunnel on the outside of the subunit. The sequence is that of Large ribosomal subunit protein uL24 (rplX) from Fusobacterium nucleatum subsp. nucleatum (strain ATCC 25586 / DSM 15643 / BCRC 10681 / CIP 101130 / JCM 8532 / KCTC 2640 / LMG 13131 / VPI 4355).